The following is a 125-amino-acid chain: UPF0251 protein Dhaf_1981 (125 aa).

It belongs to the UPF0251 family.

The chain is UPF0251 protein Dhaf_1981 from Desulfitobacterium hafniense (strain DSM 10664 / DCB-2).